We begin with the raw amino-acid sequence, 164 residues long: Neurotrophin-3 (164 aa).

A signal peptide spans 1–3 (IQS). The propeptide occupies 4–118 (TSMDQGBLSE…GLNRTSRRKR (115 aa)). The interval 89-126 (LLSENTPLEPPPLYLTEEPMGLNRTSRRKRFAEGKSHR) is disordered. N-linked (GlcNAc...) asparagine glycosylation is present at Asn-111.

The protein belongs to the NGF-beta family.

It is found in the secreted. Its function is as follows. Seems to promote the survival of visceral and proprioceptive sensory neurons. The chain is Neurotrophin-3 (NTF3) from Cylindrophis ruffus (Red-tailed pipe snake).